Consider the following 408-residue polypeptide: Putative glutamate--cysteine ligase 2 (408 aa).

This sequence belongs to the glutamate--cysteine ligase type 2 family. YbdK subfamily.

The catalysed reaction is L-cysteine + L-glutamate + ATP = gamma-L-glutamyl-L-cysteine + ADP + phosphate + H(+). Its function is as follows. ATP-dependent carboxylate-amine ligase which exhibits weak glutamate--cysteine ligase activity. In Bradyrhizobium sp. (strain BTAi1 / ATCC BAA-1182), this protein is Putative glutamate--cysteine ligase 2.